A 210-amino-acid chain; its full sequence is NDR1/HIN1-like protein 12 (210 aa).

Residues 23–43 traverse the membrane as a helical segment; that stretch reads GVIIGFIIIVLITIFLVWIIL. Asn-61 is a glycosylation site (N-linked (GlcNAc...) asparagine).

As to quaternary structure, may form oligomers or be a component of larger protein complex in plasma membranes. In terms of tissue distribution, expressed in leaves, stems and flowers, and, to a lower extent, in siliques and roots.

The protein localises to the cell membrane. Functionally, may play a role in plant immunity. This Arabidopsis thaliana (Mouse-ear cress) protein is NDR1/HIN1-like protein 12.